The sequence spans 395 residues: MSQHFHHNPVRVKSGSLFATASEALQARLSKIKRKDKECQAYFRKVIKSTFFQIVMITTVTTNSFLLVLGTNYDIQFEFFRTFEVSELFFVSVYVCEFLMKVYVDPITYWKDGYNILDVIILIILTIPYLLRKIKGNHSAYLHFADGIQSLRILKLISYSRGIRTLIIAVGETVYTVASVLTLLFLLMFVFAILGFCLFGVTDRGDLENWGNLASAFFTLFSLATVDGWTDLQEELDKRKFTVSRAFTILFILLASFIFLNMFVGVMIMHTEDSMKKFERDLTLERNLAIMEEKQIILKRQQEEVNRLMNTQKSGSMNFIDMVEGFKKTLRHTDPMVLDDFSTSLSFIDIYLVTLDNQDVIVSKLQELYCEIVNVLSLMLEDMPKESSSSLSGLS.

At 1 to 48 (MSQHFHHNPVRVKSGSLFATASEALQARLSKIKRKDKECQAYFRKVIK) the chain is on the cytoplasmic side. A helical transmembrane segment spans residues 49-71 (STFFQIVMITTVTTNSFLLVLGT). The Extracellular segment spans residues 72-80 (NYDIQFEFF). The chain crosses the membrane as a helical span at residues 81-107 (RTFEVSELFFVSVYVCEFLMKVYVDPI). Thr-108 is a topological domain (cytoplasmic). A helical membrane pass occupies residues 109 to 131 (YWKDGYNILDVIILIILTIPYLL). At 132-143 (RKIKGNHSAYLH) the chain is on the extracellular side. Residues 144–160 (FADGIQSLRILKLISYS) traverse the membrane as a helical segment. The Cytoplasmic portion of the chain corresponds to 161-168 (RGIRTLII). Residues 169–195 (AVGETVYTVASVLTLLFLLMFVFAILG) form a helical membrane-spanning segment. The Extracellular portion of the chain corresponds to 196-216 (FCLFGVTDRGDLENWGNLASA). The segment at residues 217–236 (FFTLFSLATVDGWTDLQEEL) is an intramembrane region (helical; Pore-forming). The Extracellular segment spans residues 237 to 242 (DKRKFT). The chain crosses the membrane as a helical span at residues 243–268 (VSRAFTILFILLASFIFLNMFVGVMI). Topologically, residues 269 to 395 (MHTEDSMKKF…ESSSSLSGLS (127 aa)) are cytoplasmic.

Belongs to the cation channel sperm-associated (TC 1.A.1.19) family. In terms of assembly, component of the CatSper complex or CatSpermasome composed of the core pore-forming members CATSPER1, CATSPER2, CATSPER3 and CATSPER4 as well as auxiliary members CATSPERB, CATSPERG2, CATSPERD, CATSPERE, CATSPERZ, C2CD6/CATSPERT, SLCO6C1, TMEM249, TMEM262 and EFCAB9. HSPA1 may be an additional auxiliary complex member. The core complex members CATSPER1, CATSPER2, CATSPER3 and CATSPER4 form a heterotetrameric channel. The auxiliary CATSPERB, CATSPERG2, CATSPERD and CATSPERE subunits form a pavilion-like structure over the pore which stabilizes the complex through interactions with CATSPER4, CATSPER3, CATSPER1 and CATSPER2 respectively. SLCO6C1 interacts with CATSPERE and TMEM262/CATSPERH interacts with CATSPERB, further stabilizing the complex. C2CD6/CATSPERT interacts at least with CATSPERD and is required for targeting the CatSper complex in the flagellar membrane. As to expression, testis-specific.

It localises to the cell projection. The protein resides in the cilium. The protein localises to the flagellum membrane. It catalyses the reaction Ca(2+)(in) = Ca(2+)(out). With respect to regulation, in contrast to the human ortholog, not activated by progesterone. Activated by intracellular alkalinization. In terms of biological role, pore-forming subunit of the CatSper complex, a sperm-specific voltage-gated calcium channel that plays a central role in sperm cell hyperactivation. Controls calcium entry to mediate the hyperactivated motility, a step needed for sperm motility which is essential late in the preparation of sperm for fertilization. The polypeptide is Cation channel sperm-associated protein 3 (Catsper3) (Mus musculus (Mouse)).